The sequence spans 212 residues: Guanylate kinase (212 aa).

Residues 5-187 (GILCIISAPS…ALMHLQSIML (183 aa)) enclose the Guanylate kinase-like domain. 12 to 19 (APSGTGKS) lines the ATP pocket.

The protein belongs to the guanylate kinase family.

It localises to the cytoplasm. It catalyses the reaction GMP + ATP = GDP + ADP. Essential for recycling GMP and indirectly, cGMP. This chain is Guanylate kinase, found in Blochmanniella pennsylvanica (strain BPEN).